Reading from the N-terminus, the 282-residue chain is 4-hydroxybenzoate octaprenyltransferase (282 aa).

Helical transmembrane passes span 17–37, 40–60, 90–110, 113–133, 135–155, 163–183, 207–227, 231–251, and 262–282; these read IGIL…NQGF, IDLL…GCVI, AFIL…KLPI, FYFA…KRFF, APQL…FIAS, FIVL…MYAM, LIIA…AINK, CFFY…LKLI, and AFLV…LALI.

It belongs to the UbiA prenyltransferase family. Mg(2+) serves as cofactor.

It is found in the cell inner membrane. The enzyme catalyses all-trans-octaprenyl diphosphate + 4-hydroxybenzoate = 4-hydroxy-3-(all-trans-octaprenyl)benzoate + diphosphate. It functions in the pathway cofactor biosynthesis; ubiquinone biosynthesis. Its function is as follows. Catalyzes the prenylation of para-hydroxybenzoate (PHB) with an all-trans polyprenyl group. Mediates the second step in the final reaction sequence of ubiquinone-8 (UQ-8) biosynthesis, which is the condensation of the polyisoprenoid side chain with PHB, generating the first membrane-bound Q intermediate 3-octaprenyl-4-hydroxybenzoate. The protein is 4-hydroxybenzoate octaprenyltransferase of Legionella pneumophila (strain Lens).